Consider the following 164-residue polypeptide: Transcription elongation factor GreA (164 aa).

A coiled-coil region spans residues Y50–V76.

Belongs to the GreA/GreB family.

Functionally, necessary for efficient RNA polymerase transcription elongation past template-encoded arresting sites. The arresting sites in DNA have the property of trapping a certain fraction of elongating RNA polymerases that pass through, resulting in locked ternary complexes. Cleavage of the nascent transcript by cleavage factors such as GreA or GreB allows the resumption of elongation from the new 3'terminus. GreA releases sequences of 2 to 3 nucleotides. The sequence is that of Transcription elongation factor GreA from Mycolicibacterium smegmatis (strain ATCC 700084 / mc(2)155) (Mycobacterium smegmatis).